The chain runs to 237 residues: Ubiquinone biosynthesis O-methyltransferase (237 aa).

S-adenosyl-L-methionine contacts are provided by Arg-38, Gly-57, Asp-78, and Met-122.

Belongs to the methyltransferase superfamily. UbiG/COQ3 family.

It carries out the reaction a 3-demethylubiquinol + S-adenosyl-L-methionine = a ubiquinol + S-adenosyl-L-homocysteine + H(+). The enzyme catalyses a 3-(all-trans-polyprenyl)benzene-1,2-diol + S-adenosyl-L-methionine = a 2-methoxy-6-(all-trans-polyprenyl)phenol + S-adenosyl-L-homocysteine + H(+). Its pathway is cofactor biosynthesis; ubiquinone biosynthesis. O-methyltransferase that catalyzes the 2 O-methylation steps in the ubiquinone biosynthetic pathway. The chain is Ubiquinone biosynthesis O-methyltransferase from Methylococcus capsulatus (strain ATCC 33009 / NCIMB 11132 / Bath).